Consider the following 1756-residue polypeptide: MIKVLGLLLGPLSSWVEVSGPIIIFGLYYGFLATLPFGPSKIYSTRSFLLGKPGYGIIAISGSITGQLIGFLSMYYSPIYAALWKPYAITLLVVPYMFFRFFQIMDKPSSSESPHLMNSINNPKALSLFMDGLILQLLNPILLANPVLTRLVNLFLFRYSPNISFMISGLCGWLGGHILLTIFIKWVSFRIDRNSLIDNTLLRRYINRTFSLLILCYCSFYLGRAPLPFLKGKNYEDNNGRSVTMARDDRSVAMARKNRSVAIDPQKLQELIKEEKFFRQQPWPIMCFDHNRVYQPIRYIGNSPFTRLGPVRTEVSQYFFGAYSSDGKKRISFTFLPSVLVLGEKLVGGYRDFLYTSCSSEDPYYRWNHTVKRKRDSLGNEFSDRVKALSHGSPAENVIERRVKFSNSNGDSFTEMYDPFLNGAFRGTINQFESPQMLNDSIISNLSDFIEIFMRDPKEGFPNDPLGYGYHISYLWQELEHESFPLPWEPLPTYTVRSLVPVTISSNPGTPQPKYALNRLKMKKISYLIQTPEIQPPYWLWIAWRSSIIHVPVQVARCYGDIYTNFLVYVYGRFDRLIKPSASGIIRMDAISCLFKKEYLFVYENLCFLFECLAQYEWTILLISRAGIPRDKRYSMEKKDFISLYREILLNEPLQIREIRKHVPRWSSGLMIGEYDDVDPVLLSSNRILSRKVKDTMTFDIGQRRIGVVQNRYSAEADYRRNLIQGSIRAKRRKIMIWKRIQPNVHSLFFLKRKEIPAYPKDYYDTSDSGRVDKEQIGEEVREKIQRVEDPLSQQTIAESLCLTWPELHYFRGLLLMAQSNIRKNIILPSLIIAKNMGRILLFQVPEFYKDWEEMRREMHVICASDGTELSETTFPDKWETQGMQIKLLFPFRLKPWHRSKPQSAKRLRWSYLTTFGLETDIPFGDPTSNLGIFSKFLKPIFKKVKRRLMGSTGIRRVPRVGYIDKSELNDRIQNKLLSETTPMGSANDSSEVNDQFGYETQTINVKDQDDWTTTMKERIESIAIINSSPITGMSLVDSEIHTGSKGSFNILGSTLKKRLVQIRRIPGLFRNKSVQLIRKRFYSIKFFIKRMDRRMDRDLLPSFINFIASNIKFWIQSAWIRSTRNITTIYGRIFIINKDISRINRGKITNYYSINEKIQDFEIRPDRNMFSMSQAYIFHKIWQIRALDIQRILDHEKPQDLKENDWKQWLRCFDRYNLSPQIWSRINPNKCRNIVNKQCTCYEERFVPYEQQEDSIFATVMEPFLGLLRKMNKRYRYDLLSYSYLNSTKDLDILNLTDIPGPPVQPAIPDERDITDREGILKEKFINDIIEEDWKGTDFNIVNGSRSTVDIYDAIRSCDYDHTTSIDRQKKKTDLITNQQGIDETRRENVGIMDSPKIEKRISQLDLNFWLFPELSGIKNIYYETKSKFIPGNSLLREERERKKIEEEERKETTNVLEQIIGIRSNVKNKQVEDGQDKNGQVEDQDGQDQDGQVEDQQTDGKKKTNKGLFQCKVVDVLGKKRFFYLANICRVMSGMKDPGTYLRIQERNIDLSLMAFCIAIQKNSSANKISKELALQRNVRGKVRNDNEIREDKKIMVFQPYRLSSIVDDQFLMYKIVSISLKLKKRAGEWIDGDFYDGSVQRGKILGDEKNIFSSLNLEDILLPKRRREFRILNRFDLENDHVGFSNGKDIQNDEELMGRDQHLSVDTTQIIKRFLWPSYRLEDIICMNRYWFNTNDGSRSAMLRIRMYPLTVN.

The next 6 membrane-spanning stretches (helical) occupy residues 18–38 (VSGP…LPFG), 54–74 (GYGI…FLSM), 79–99 (IYAA…YMFF), 128–148 (LFMD…NPVL), 163–183 (ISFM…LTIF), and 210–230 (FSLL…LPFL). The interval 1469 to 1504 (KNKQVEDGQDKNGQVEDQDGQDQDGQVEDQQTDGKK) is disordered. A compositionally biased stretch (basic and acidic residues) spans 1471–1482 (KQVEDGQDKNGQ). Residues 1484–1499 (EDQDGQDQDGQVEDQQ) show a composition bias toward acidic residues.

This sequence belongs to the TIC214 family. As to quaternary structure, part of the Tic complex.

The protein localises to the plastid. It localises to the chloroplast inner membrane. Functionally, involved in protein precursor import into chloroplasts. May be part of an intermediate translocation complex acting as a protein-conducting channel at the inner envelope. The sequence is that of Protein TIC 214 from Pinus thunbergii (Japanese black pine).